Reading from the N-terminus, the 357-residue chain is MKKRTFALALSMIIASGVVLGACGSSSDDKKSGDDKSSKDFTVAMVTDTGGVDDRSFNQSAWEGLQKFGKANDMEKGTDGYNYLQSASEADYKTNLNTAVRSDYDLIYGIGYKLKDAIEEVSKQKPKNQFAIVDDTIDDRDNVVSIGFKDNDGSYLVGVVAGLTTKTNKVGFVGGVKGAVIDRFEAGFTAGVKAVNPNAQIDVQYANDFAKADKGQQIASSMYSSGVDVIFHAAGGTGNGVFAEAKNLKKKDPSRAVWVIGVDRDQWDEGKVTANDGKDYNVTLTSEIKRVDIAVDDLATRTKAGDFPGGTKIEYGLDKDAVGLSEHQDNISKDVLAKVEEYKQKIVDGDIKVPEKP.

A signal peptide spans 1–22 (MKKRTFALALSMIIASGVVLGA). Cys23 carries the N-palmitoyl cysteine lipid modification. A lipid anchor (S-diacylglycerol cysteine) is attached at Cys23.

The protein belongs to the BMP lipoprotein family.

Its subcellular location is the cell membrane. This Listeria innocua serovar 6a (strain ATCC BAA-680 / CLIP 11262) protein is CD4+ T-cell-stimulating antigen (tcsA).